We begin with the raw amino-acid sequence, 189 residues long: Ion-translocating oxidoreductase complex subunit B (189 aa).

Residues 1 to 26 are hydrophobic; the sequence is MSQVIIAIILLGLLALAFGALLGYAA. The 4Fe-4S domain occupies 32–90; it reads EGDPIIDQAEALLPQTQCGQCGYPGCRPYAEAIANGEKINKCPPGGTATMEKLAELMGV. Residues Cys49, Cys52, Cys57, Cys73, Cys114, Cys117, Cys120, Cys124, Cys144, Cys147, Cys150, and Cys154 each coordinate [4Fe-4S] cluster. 2 consecutive 4Fe-4S ferredoxin-type domains span residues 105–134 and 135–164; these read KVAF…GTGK and QMHT…MIPV.

Belongs to the 4Fe4S bacterial-type ferredoxin family. RnfB subfamily. As to quaternary structure, the complex is composed of six subunits: RnfA, RnfB, RnfC, RnfD, RnfE and RnfG. Requires [4Fe-4S] cluster as cofactor.

It is found in the cell inner membrane. Part of a membrane-bound complex that couples electron transfer with translocation of ions across the membrane. The protein is Ion-translocating oxidoreductase complex subunit B of Shewanella loihica (strain ATCC BAA-1088 / PV-4).